The primary structure comprises 330 residues: Succinoglycan biosynthesis protein ExoA (330 aa).

A run of 3 helical transmembrane segments spans residues 116–136, 260–280, and 299–319; these read ALATGADSVVVAMQTVGFSTF, IAFGALLAIVNWMAVVPVGVW, and YGPLAAVAAMVMHLAWSAGFW.

The protein belongs to the glycosyltransferase 2 family.

It is found in the cell membrane. It functions in the pathway glycan metabolism; exopolysaccharide biosynthesis. Glycosyltransferase required for the synthesis of succinoglycan (EPS I). Needed for the addition of the second sugar (glucose). Catalyzes the formation of a beta-1,3 linkage with the galactose lipid carrier. In Rhizobium meliloti (strain 1021) (Ensifer meliloti), this protein is Succinoglycan biosynthesis protein ExoA (exoA).